A 492-amino-acid polypeptide reads, in one-letter code: KAT8 regulatory NSL complex subunit 2 (492 aa).

Lys-78 participates in a covalent cross-link: Glycyl lysine isopeptide (Lys-Gly) (interchain with G-Cter in SUMO2). The interval 127 to 182 (LGSQTPESSRSEASRILDEDSWSDGEQEPITVDQTWRGDPDSEADSIDSDQEDPLK) is disordered. Thr-131 is subject to Phosphothreonine. Over residues 135–144 (SRSEASRILD) the composition is skewed to basic and acidic residues. Phosphoserine occurs at positions 147, 149, 168, 172, and 175. Over residues 167–178 (DSEADSIDSDQE) the composition is skewed to acidic residues. Positions 308–364 (DVRCSNQSLPMTRHCLTHICQDTNQVLFKCCQGSEEVPCNKPVPVSLSEDPCCPLHF) are required for interaction with other NSL complex members. The tract at residues 455–492 (AGDGCRSQGSRNSEKGSAPLSQSGLATANGKPEPTSIS) is disordered.

Component of the NSL complex at least composed of KAT8/MOF, KANSL1, KANSL2, KANSL3, MCRS1, PHF20, OGT1/OGT, WDR5 and HCFC1.

The protein resides in the nucleus. Its subcellular location is the mitochondrion. Non-catalytic component of the NSL histone acetyltransferase complex, a multiprotein complex that mediates histone H4 acetylation at 'Lys-5'- and 'Lys-8' (H4K5ac and H4K8ac) at transcription start sites and promotes transcription initiation. Required for NSL complex stability and for transcription of intraciliary transport genes in both ciliated and non-ciliated cells by regulating histone H4 acetylation at 'Lys-5'- and 'Lys-12' (H4K5ac and H4K12ac). This is necessary for cilium assembly in ciliated cells and for organization of the microtubule cytoskeleton in non-ciliated cells. Required within the NSL complex to maintain nuclear architecture stability by promoting KAT8-mediated acetylation of lamin LMNA. This is KAT8 regulatory NSL complex subunit 2 (KANSL2) from Pongo abelii (Sumatran orangutan).